Consider the following 282-residue polypeptide: Probable methylxanthine N7-demethylase NdmC (282 aa).

The enzyme catalyses 7-methylxanthine + NADPH + O2 + H(+) = xanthine + formaldehyde + NADP(+) + H2O. It carries out the reaction 7-methylxanthine + NADH + O2 + H(+) = xanthine + formaldehyde + NAD(+) + H2O. In terms of biological role, involved in the caffeine degradation, which is the essential first step for assimilating the carbon and nitrogen in caffeine. Probably catalyzes the N7-demethylation of 7-methylxanthine to produce xanthine and formaldehyde. The polypeptide is Probable methylxanthine N7-demethylase NdmC (Pseudomonas sp. (strain TJI-51)).